Consider the following 168-residue polypeptide: Plastocyanin B, chloroplastic (168 aa).

The N-terminal 69 residues, 1 to 69, are a transit peptide targeting the chloroplast; sequence MAAVTSAAVS…SAMIASNAMA (69 aa). The 99-residue stretch at 70 to 168 folds into the Plastocyanin-like domain; that stretch reads VDVLLGADDG…AGMVGKVIVN (99 aa). The Cu cation site is built by H106, C153, H156, and M161.

The protein belongs to the plastocyanin family. The cofactor is Cu(2+).

The protein resides in the plastid. It is found in the chloroplast thylakoid membrane. In terms of biological role, participates in electron transfer between P700 and the cytochrome b6-f complex in photosystem I. This is Plastocyanin B, chloroplastic (PETE) from Populus nigra (Lombardy poplar).